A 276-amino-acid polypeptide reads, in one-letter code: B3 domain-containing protein REM22 (276 aa).

Residues 11-115 constitute a DNA-binding region (TF-B3); sequence SETMSIQDTV…VFHFCVYEYG (105 aa). The disordered stretch occupies residues 141-164; sequence GNEESTKGLEESPRRGGTSRRRAK. A compositionally biased stretch (basic and acidic residues) spans 144 to 154; the sequence is ESTKGLEESPR.

It localises to the nucleus. The protein is B3 domain-containing protein REM22 (REM22) of Arabidopsis thaliana (Mouse-ear cress).